The sequence spans 155 residues: Protein phosphatase 1 regulatory subunit 17 (155 aa).

The segment at 41 to 73 is disordered; the sequence is KKKPRKGKNVQATLNVESDQKKPRRKDTPALHI. Over residues 58–69 the composition is skewed to basic and acidic residues; it reads SDQKKPRRKDTP. Residues threonine 68 and threonine 119 each carry the phosphothreonine; by PKG/PRKG1 modification.

Post-translationally, substrate for cGMP-dependent protein kinase. Phosphorylated by PRKG1 isoform alpha. Phosphorylation of Thr-68 and Thr-119 is required for its phosphatase activity. In terms of processing, substrate for cGMP-dependent protein kinase. In terms of tissue distribution, highly expressed in cerebellum.

Inhibits phosphatase activities of protein phosphatase 1 (PP1) and protein phosphatase 2A (PP2A) complexes. The protein is Protein phosphatase 1 regulatory subunit 17 (PPP1R17) of Homo sapiens (Human).